Here is a 378-residue protein sequence, read N- to C-terminus: Homoserine O-acetyltransferase (378 aa).

The region spanning 54–355 (NAILVCHALS…NNPAGHDSFL (302 aa)) is the AB hydrolase-1 domain. Residue Ser159 is the Nucleophile of the active site. Residue Arg228 coordinates substrate. Residues Asp318 and His351 contribute to the active site. Asp352 lines the substrate pocket.

It belongs to the AB hydrolase superfamily. MetX family. In terms of assembly, homodimer.

Its subcellular location is the cytoplasm. The enzyme catalyses L-homoserine + acetyl-CoA = O-acetyl-L-homoserine + CoA. The protein operates within amino-acid biosynthesis; L-methionine biosynthesis via de novo pathway; O-acetyl-L-homoserine from L-homoserine: step 1/1. Its function is as follows. Transfers an acetyl group from acetyl-CoA to L-homoserine, forming acetyl-L-homoserine. This Leptospira biflexa serovar Patoc (strain Patoc 1 / Ames) protein is Homoserine O-acetyltransferase.